Here is a 444-residue protein sequence, read N- to C-terminus: Methylenetetrahydrofolate--tRNA-(uracil-5-)-methyltransferase TrmFO (444 aa).

Residue 10-15 participates in FAD binding; the sequence is GAGLAG.

This sequence belongs to the MnmG family. TrmFO subfamily. The cofactor is FAD.

The protein resides in the cytoplasm. The enzyme catalyses uridine(54) in tRNA + (6R)-5,10-methylene-5,6,7,8-tetrahydrofolate + NADH + H(+) = 5-methyluridine(54) in tRNA + (6S)-5,6,7,8-tetrahydrofolate + NAD(+). It carries out the reaction uridine(54) in tRNA + (6R)-5,10-methylene-5,6,7,8-tetrahydrofolate + NADPH + H(+) = 5-methyluridine(54) in tRNA + (6S)-5,6,7,8-tetrahydrofolate + NADP(+). Its function is as follows. Catalyzes the folate-dependent formation of 5-methyl-uridine at position 54 (M-5-U54) in all tRNAs. The sequence is that of Methylenetetrahydrofolate--tRNA-(uracil-5-)-methyltransferase TrmFO from Streptococcus mutans serotype c (strain ATCC 700610 / UA159).